The primary structure comprises 334 residues: Beta-ketoacyl-[acyl-carrier-protein] synthase III (334 aa).

Catalysis depends on residues cysteine 116 and histidine 256. The segment at 257 to 261 (QANLR) is ACP-binding. Residue asparagine 286 is part of the active site.

It belongs to the thiolase-like superfamily. FabH family. As to quaternary structure, homodimer.

Its subcellular location is the cytoplasm. It carries out the reaction malonyl-[ACP] + acetyl-CoA + H(+) = 3-oxobutanoyl-[ACP] + CO2 + CoA. Its pathway is lipid metabolism; fatty acid biosynthesis. In terms of biological role, catalyzes the condensation reaction of fatty acid synthesis by the addition to an acyl acceptor of two carbons from malonyl-ACP. Catalyzes the first condensation reaction which initiates fatty acid synthesis and may therefore play a role in governing the total rate of fatty acid production. Possesses both acetoacetyl-ACP synthase and acetyl transacylase activities. Its substrate specificity determines the biosynthesis of branched-chain and/or straight-chain of fatty acids. The polypeptide is Beta-ketoacyl-[acyl-carrier-protein] synthase III (Phocaeicola vulgatus (strain ATCC 8482 / DSM 1447 / JCM 5826 / CCUG 4940 / NBRC 14291 / NCTC 11154) (Bacteroides vulgatus)).